Reading from the N-terminus, the 215-residue chain is Pyrrolidone-carboxylate peptidase (215 aa).

Active-site residues include Glu-78, Cys-141, and His-165.

The protein belongs to the peptidase C15 family. As to quaternary structure, homotetramer.

Its subcellular location is the cytoplasm. It catalyses the reaction Release of an N-terminal pyroglutamyl group from a polypeptide, the second amino acid generally not being Pro.. Functionally, removes 5-oxoproline from various penultimate amino acid residues except L-proline. This is Pyrrolidone-carboxylate peptidase from Streptococcus suis (strain 98HAH33).